A 564-amino-acid chain; its full sequence is O-fucosyltransferase 6 (564 aa).

The chain crosses the membrane as a helical; Signal-anchor for type II membrane protein span at residues 17 to 37; it reads LLPFICAVSGALLILFALLSI. Residues Asn-95 and Asn-139 are each glycosylated (N-linked (GlcNAc...) asparagine). 277 to 279 serves as a coordination point for substrate; that stretch reads HLR. Asn-449 carries an N-linked (GlcNAc...) asparagine glycan. Over residues 501-512 the composition is skewed to basic and acidic residues; sequence MDSRKFGKKEQK. Positions 501–542 are disordered; sequence MDSRKFGKKEQKEDEDAELSSSETDYEEDQTDLQDRGLYNGT. Positions 513 to 532 are enriched in acidic residues; it reads EDEDAELSSSETDYEEDQTD. Asn-540 carries N-linked (GlcNAc...) asparagine glycosylation.

Belongs to the glycosyltransferase GT106 family.

The protein localises to the membrane. It participates in glycan metabolism. The polypeptide is O-fucosyltransferase 6 (Arabidopsis thaliana (Mouse-ear cress)).